We begin with the raw amino-acid sequence, 551 residues long: Glucans biosynthesis protein D (551 aa).

Residues 1 to 32 constitute a signal peptide (tat-type signal); sequence MNRRRFIKGSMAMAAVCGSSGIASLFSQAAFA.

The protein belongs to the OpgD/OpgG family. Post-translationally, predicted to be exported by the Tat system. The position of the signal peptide cleavage has not been experimentally proven.

It localises to the periplasm. It participates in glycan metabolism; osmoregulated periplasmic glucan (OPG) biosynthesis. Its function is as follows. Probably involved in the control of the structural glucose backbone of osmoregulated periplasmic glucans (OPGs). The protein is Glucans biosynthesis protein D (mdoD) of Salmonella typhimurium (strain LT2 / SGSC1412 / ATCC 700720).